A 213-amino-acid polypeptide reads, in one-letter code: Cytokinin riboside 5'-monophosphate phosphoribohydrolase LOG1 (213 aa).

Residues Glu78, 96 to 97, 113 to 119, and Thr125 contribute to the substrate site; these read RK and GYGTLEE.

Belongs to the LOG family. In terms of tissue distribution, expressed in roots and shoots. Detected in the vascular tissues of roots, cotyledons, leaves and pistils, in the shoot apical meristem and in immature flowers.

The protein resides in the cytoplasm. Its subcellular location is the nucleus. It catalyses the reaction N(6)-(dimethylallyl)adenosine 5'-phosphate + H2O = N(6)-dimethylallyladenine + D-ribose 5-phosphate. The catalysed reaction is 9-ribosyl-trans-zeatin 5'-phosphate + H2O = trans-zeatin + D-ribose 5-phosphate. In terms of biological role, cytokinin-activating enzyme working in the direct activation pathway. Phosphoribohydrolase that converts inactive cytokinin nucleotides to the biologically active free-base forms. The polypeptide is Cytokinin riboside 5'-monophosphate phosphoribohydrolase LOG1 (LOG1) (Arabidopsis thaliana (Mouse-ear cress)).